The following is a 391-amino-acid chain: MRRTRSTRRALLVAVCLSPLIALAAWQAYPFRSNNFDTVSVSRGSIESSVSALGTLQPRRYVDVGAQASGQIRKLHVEAGDDVTEGQLLVEIDPSTQQAKVDAGRYSIEMLKAQLAEQRAQYTLARQQYQRQQRLAAGGATRTEDVQSAQAQMLATQARIEMYQAQIRQAQASLRSDEAELGYTRIYAPMSGTVVAVDAREGQTLNAQQQTPLILRIAKLSPMTVWAQVSEADIGRVKPGMPAYFTTLSGEGRRWTGKVRQILPVPPKPLDQSNQGGGSPTSGSGGQSGSGRVVLYTVLVDVDNGDHQLMAEMTAQVFFVAATAENILTAPVAAIHDDGKGGQVAWVVGSNGKPQSRQIRTGISDRLRVQVLAGLEEGDRLLMAAPDGSDS.

A signal peptide spans 1 to 24 (MRRTRSTRRALLVAVCLSPLIALA). A coiled-coil region spans residues 108–180 (IEMLKAQLAE…QASLRSDEAE (73 aa)). The disordered stretch occupies residues 263 to 289 (LPVPPKPLDQSNQGGGSPTSGSGGQSG). Residues 275 to 289 (QGGGSPTSGSGGQSG) show a composition bias toward gly residues.

This sequence belongs to the membrane fusion protein (MFP) (TC 8.A.1) family. In terms of assembly, part of the tripartite efflux system PvdRT-OpmQ, which is composed of an inner membrane component with both ATPase and permease domains, PvdT, a periplasmic membrane fusion protein, PvdR, and an outer membrane component, OpmQ.

The protein localises to the periplasm. Its function is as follows. Part of the tripartite efflux system PvdRT-OpmQ required for the secretion into the extracellular milieu of the siderophore pyoverdine (PVD), which is involved in iron acquisition. This subunit is an adapter protein that stimulates the ATPase activity of PvdT and connects the inner and outer membrane components. The system is responsible for export of newly synthesized PVD after the final steps of biosynthesis have taken place in the periplasm. It is also responsible for recycling of PVD after internalization of ferri-PVD into the periplasm by the outer-membrane receptor FpvA and release of iron from PVD, thus making PVD available for new cycles of iron uptake. In addition, can expel unwanted metals complexed with PVD from the periplasm into the extracellular medium. Does not contribute to resistance to antibiotics belonging to the classes of tetracyclines, aminoglycosides, beta-lactams and macrolides, and chloramphenicol. The sequence is that of Pyoverdine export membrane fusion protein PvdR from Pseudomonas aeruginosa (strain ATCC 15692 / DSM 22644 / CIP 104116 / JCM 14847 / LMG 12228 / 1C / PRS 101 / PAO1).